The primary structure comprises 571 residues: Polypeptide N-acetylgalactosaminyltransferase 2 (571 aa).

Residues 1–6 lie on the Cytoplasmic side of the membrane; sequence MRRRSR. The helical; Signal-anchor for type II membrane protein transmembrane segment at 7-24 threads the bilayer; sequence MLLCFAFLWVLGIAYYMY. The Lumenal segment spans residues 25-571; it reads SGGGSALAGG…QWKFTLNLQQ (547 aa). O-linked (Xyl...) (chondroitin sulfate) serine glycosylation occurs at serine 29. A compositionally biased stretch (basic and acidic residues) spans 53 to 66; sequence KKDLHHSNGEEKAQ. Residues 53–74 are disordered; it reads KKDLHHSNGEEKAQSMETLPPG. Intrachain disulfides connect cysteine 126–cysteine 354, cysteine 345–cysteine 423, cysteine 456–cysteine 473, and cysteine 496–cysteine 513. Residues 135–240 form a catalytic subdomain A region; it reads LPATSVVITF…EHWLEPLLER (106 aa). Substrate-binding residues include threonine 143, aspartate 176, and arginine 201. Position 224 (aspartate 224) interacts with Mn(2+). Substrate is bound at residue serine 225. Histidine 226 contacts Mn(2+). Residues 300–362 are catalytic subdomain B; that stretch reads PIKTPMIAGG…PCSRVGHVFR (63 aa). Tryptophan 331 contributes to the substrate binding site. A Mn(2+)-binding site is contributed by histidine 359. Substrate contacts are provided by arginine 362, histidine 365, and tyrosine 367. Residues 443–566 enclose the Ricin B-type lectin domain; that stretch reads QDIAFGALQQ…PALSQQWKFT (124 aa). Serine 536 carries the post-translational modification Phosphoserine. Cysteines 539 and 555 form a disulfide.

This sequence belongs to the glycosyltransferase 2 family. GalNAc-T subfamily. Requires Mn(2+) as cofactor. In terms of tissue distribution, detected in urine (at protein level). Widely expressed.

The protein localises to the golgi apparatus. It is found in the golgi stack membrane. It localises to the secreted. The catalysed reaction is L-seryl-[protein] + UDP-N-acetyl-alpha-D-galactosamine = a 3-O-[N-acetyl-alpha-D-galactosaminyl]-L-seryl-[protein] + UDP + H(+). The enzyme catalyses L-threonyl-[protein] + UDP-N-acetyl-alpha-D-galactosamine = a 3-O-[N-acetyl-alpha-D-galactosaminyl]-L-threonyl-[protein] + UDP + H(+). It participates in protein modification; protein glycosylation. In terms of biological role, catalyzes the initial reaction in O-linked oligosaccharide biosynthesis, the transfer of an N-acetyl-D-galactosamine residue to a serine or threonine residue on the protein receptor. Has a broad spectrum of substrates for peptides such as EA2, Muc5AC, Muc1a, Muc1b. Probably involved in O-linked glycosylation of the immunoglobulin A1 (IgA1) hinge region. Involved in O-linked glycosylation of APOC-III, ANGPTL3 and PLTP. It participates in the regulation of HDL-C metabolism. The sequence is that of Polypeptide N-acetylgalactosaminyltransferase 2 (GALNT2) from Homo sapiens (Human).